The primary structure comprises 673 residues: Methionine--tRNA ligase (673 aa).

Positions 13–23 (PYANGSIHLGH) match the 'HIGH' region motif. Zn(2+)-binding residues include Cys144, Cys147, Cys157, and Cys160. The 'KMSKS' region signature appears at 330–334 (KMSKS). Lys333 lines the ATP pocket. Positions 572 to 673 (DFAQLDLRIA…GRARAGMTIS (102 aa)) constitute a tRNA-binding domain.

This sequence belongs to the class-I aminoacyl-tRNA synthetase family. MetG type 1 subfamily. As to quaternary structure, homodimer. Zn(2+) is required as a cofactor.

The protein resides in the cytoplasm. It catalyses the reaction tRNA(Met) + L-methionine + ATP = L-methionyl-tRNA(Met) + AMP + diphosphate. Is required not only for elongation of protein synthesis but also for the initiation of all mRNA translation through initiator tRNA(fMet) aminoacylation. The chain is Methionine--tRNA ligase from Dichelobacter nodosus (strain VCS1703A).